A 488-amino-acid polypeptide reads, in one-letter code: Germacrene A hydroxylase (488 aa).

Over 1–6 the chain is Cytoplasmic; it reads MELSLT. The chain crosses the membrane as a helical; Signal-anchor for type II membrane protein span at residues 7-23; that stretch reads TSIALATIVLILYKLAT. Topologically, residues 24 to 488 are lumenal; it reads RPKSNKKRLP…KTELILVPSF (465 aa). N-linked (GlcNAc...) asparagine glycans are attached at residues N260 and N379. C432 serves as a coordination point for heme.

This sequence belongs to the cytochrome P450 family. Heme is required as a cofactor.

The protein resides in the endoplasmic reticulum membrane. The protein localises to the microsome membrane. It carries out the reaction (+)-(R)-germacrene A + 3 reduced [NADPH--hemoprotein reductase] + 3 O2 = germacra-1(10),4,11(13)-trien-12-oate + 3 oxidized [NADPH--hemoprotein reductase] + 4 H2O + 4 H(+). The protein operates within secondary metabolite biosynthesis; terpenoid biosynthesis. With respect to regulation, inhibited by cytochrome C, miconazole, aminobenzotriazole, metyrapone and clotrimazole. In terms of biological role, involved in the biosynthesis of germacrene-derived sesquiterpene lactones. Catalyzes three consecutive oxidations of germacrene A to produce germacrene A acid. Could also catalyze the three-step oxidation of non-natural substrate amorphadiene to artemisinic acid. Can use beta-elemene as substrate. This is Germacrene A hydroxylase from Cichorium intybus (Chicory).